We begin with the raw amino-acid sequence, 458 residues long: Tissue-resident T-cell transcription regulator protein ZNF683 (458 aa).

Disordered regions lie at residues P84–E109 and T249–R275. 3 consecutive C2H2-type zinc fingers follow at residues Y301–H323, F329–H351, and H357–H379.

The protein belongs to the krueppel C2H2-type zinc-finger protein family. As to expression, expressed in tissue-resident memory T (Trm) cell population in non-lymphoid organs, such as skin and gut. Expressed in innate lymphocytes, including tissue-resident natural killer (trNK) and natural killer T (NKT) cells in thymus, spleen and liver.

Its subcellular location is the nucleus. Its function is as follows. Transcription factor that mediates a transcriptional program in various innate and adaptive immune tissue-resident lymphocyte T-cell types such as tissue-resident memory T (Trm), natural killer (trNK) and natural killer T (NKT) cells and negatively regulates gene expression of proteins that promote the egress of tissue-resident T-cell populations from non-lymphoid organs. Plays a role in the development, retention and long-term establishment of adaptive and innate tissue-resident lymphocyte T-cell types in non-lymphoid organs, such as the skin and gut, but also in other nonbarrier tissues like liver and kidney, and therefore may provide immediate immunological protection against reactivating infections or viral reinfection. Also plays a role in the differentiation of both thymic and peripheral NKT cells. Negatively regulates the accumulation of interferon-gamma (IFN-gamma) in NKT cells at steady state or after antigenic stimulation. Positively regulates granzyme B production in NKT cells after innate stimulation. Associates with the transcriptional repressor PRDM1/BLIMP1 to chromatin at gene promoter regions. The protein is Tissue-resident T-cell transcription regulator protein ZNF683 of Mus musculus (Mouse).